The sequence spans 535 residues: Light-independent protochlorophyllide reductase subunit B (535 aa).

[4Fe-4S] cluster is bound at residue Asp36. The active-site Proton donor is Asp292. 428 to 429 provides a ligand contact to substrate; sequence GL. The interval 446 to 483 is disordered; it reads DEASPSESAPHASNGHEDVAGGSTAQSVPSHAATEGDG.

This sequence belongs to the ChlB/BchB/BchZ family. Protochlorophyllide reductase is composed of three subunits; BchL, BchN and BchB. Forms a heterotetramer of two BchB and two BchN subunits. The cofactor is [4Fe-4S] cluster.

The catalysed reaction is chlorophyllide a + oxidized 2[4Fe-4S]-[ferredoxin] + 2 ADP + 2 phosphate = protochlorophyllide a + reduced 2[4Fe-4S]-[ferredoxin] + 2 ATP + 2 H2O. Its pathway is porphyrin-containing compound metabolism; bacteriochlorophyll biosynthesis (light-independent). Component of the dark-operative protochlorophyllide reductase (DPOR) that uses Mg-ATP and reduced ferredoxin to reduce ring D of protochlorophyllide (Pchlide) to form chlorophyllide a (Chlide). This reaction is light-independent. The NB-protein (BchN-BchB) is the catalytic component of the complex. The polypeptide is Light-independent protochlorophyllide reductase subunit B (Chlorobium limicola (strain DSM 245 / NBRC 103803 / 6330)).